Here is a 245-residue protein sequence, read N- to C-terminus: tRNA (guanine-N(1)-)-methyltransferase (245 aa).

Residues G113 and I133–L138 each bind S-adenosyl-L-methionine.

This sequence belongs to the RNA methyltransferase TrmD family. In terms of assembly, homodimer.

The protein localises to the cytoplasm. It catalyses the reaction guanosine(37) in tRNA + S-adenosyl-L-methionine = N(1)-methylguanosine(37) in tRNA + S-adenosyl-L-homocysteine + H(+). Specifically methylates guanosine-37 in various tRNAs. The sequence is that of tRNA (guanine-N(1)-)-methyltransferase from Anoxybacillus flavithermus (strain DSM 21510 / WK1).